Consider the following 369-residue polypeptide: Chaperone protein DnaJ (369 aa).

Residues 5 to 70 (DYYEVLGVGR…NKRAAYDQFG (66 aa)) form the J domain. The segment at 128 to 206 (GAETQIRIPR…CHGAGWVKRQ (79 aa)) adopts a CR-type zinc-finger fold. 8 residues coordinate Zn(2+): C141, C144, C158, C161, C180, C183, C194, and C197. 4 CXXCXGXG motif repeats span residues 141–148 (CDTCHGSG), 158–165 (CPTCNGHG), 180–187 (CSHCQGSG), and 194–201 (CGDCHGAG).

The protein belongs to the DnaJ family. In terms of assembly, homodimer. Requires Zn(2+) as cofactor.

It is found in the cytoplasm. Functionally, participates actively in the response to hyperosmotic and heat shock by preventing the aggregation of stress-denatured proteins and by disaggregating proteins, also in an autonomous, DnaK-independent fashion. Unfolded proteins bind initially to DnaJ; upon interaction with the DnaJ-bound protein, DnaK hydrolyzes its bound ATP, resulting in the formation of a stable complex. GrpE releases ADP from DnaK; ATP binding to DnaK triggers the release of the substrate protein, thus completing the reaction cycle. Several rounds of ATP-dependent interactions between DnaJ, DnaK and GrpE are required for fully efficient folding. Also involved, together with DnaK and GrpE, in the DNA replication of plasmids through activation of initiation proteins. The protein is Chaperone protein DnaJ of Nitrosomonas europaea (strain ATCC 19718 / CIP 103999 / KCTC 2705 / NBRC 14298).